A 494-amino-acid chain; its full sequence is Autocrine proliferation repressor protein A (494 aa).

A signal peptide spans 1 to 18 (MSKLLILLLLSLVASIFS). 3 N-linked (GlcNAc...) asparagine glycosylation sites follow: N37, N153, and N302.

The protein belongs to the pqaA family. As to quaternary structure, interacts with cfaD.

The protein resides in the secreted. Its function is as follows. Inhibitor that slows proliferation of secreting cells (also known as chalone). May function by binding to cell surface receptors. Requires cfaD for activity. Overexpression slows proliferation. This Dictyostelium discoideum (Social amoeba) protein is Autocrine proliferation repressor protein A (aprA).